A 336-amino-acid polypeptide reads, in one-letter code: Phosphoribosylformylglycinamidine cyclo-ligase (336 aa).

The protein belongs to the AIR synthase family.

The protein localises to the cytoplasm. The enzyme catalyses 2-formamido-N(1)-(5-O-phospho-beta-D-ribosyl)acetamidine + ATP = 5-amino-1-(5-phospho-beta-D-ribosyl)imidazole + ADP + phosphate + H(+). It participates in purine metabolism; IMP biosynthesis via de novo pathway; 5-amino-1-(5-phospho-D-ribosyl)imidazole from N(2)-formyl-N(1)-(5-phospho-D-ribosyl)glycinamide: step 2/2. This is Phosphoribosylformylglycinamidine cyclo-ligase from Thermoanaerobacter pseudethanolicus (strain ATCC 33223 / 39E) (Clostridium thermohydrosulfuricum).